Here is a 340-residue protein sequence, read N- to C-terminus: Glycerol-3-phosphate dehydrogenase [NAD(P)+] (340 aa).

NADPH contacts are provided by S15, Y16, H36, and K110. Sn-glycerol 3-phosphate-binding residues include K110, G139, and T141. Position 143 (A143) interacts with NADPH. Sn-glycerol 3-phosphate contacts are provided by K196, D249, S259, R260, and N261. K196 functions as the Proton acceptor in the catalytic mechanism. An NADPH-binding site is contributed by R260. Residues V284 and E286 each coordinate NADPH.

It belongs to the NAD-dependent glycerol-3-phosphate dehydrogenase family.

The protein resides in the cytoplasm. It carries out the reaction sn-glycerol 3-phosphate + NAD(+) = dihydroxyacetone phosphate + NADH + H(+). It catalyses the reaction sn-glycerol 3-phosphate + NADP(+) = dihydroxyacetone phosphate + NADPH + H(+). Its pathway is membrane lipid metabolism; glycerophospholipid metabolism. Its function is as follows. Catalyzes the reduction of the glycolytic intermediate dihydroxyacetone phosphate (DHAP) to sn-glycerol 3-phosphate (G3P), the key precursor for phospholipid synthesis. This chain is Glycerol-3-phosphate dehydrogenase [NAD(P)+], found in Serratia marcescens.